The sequence spans 583 residues: uncharacterized protein (583 aa).

Position 24-140 (24-140 (ILADIDDEQL…SAMLRAMARM (117 aa))) interacts with a nucleoside 3',5'-cyclic phosphate. The PNPLA domain occupies 309 to 469 (LVMAGGGARG…LNNLPANVMC (161 aa)). The GXGXXG motif lies at 313–318 (GGGARG). A GXSXG motif is present at residues 340–344 (GTSSG). Serine 342 serves as the catalytic Nucleophile. The active-site Proton acceptor is aspartate 456. A DGA/G motif is present at residues 456 to 458 (DGG).

Belongs to the NTE family.

This is an uncharacterized protein from Mycobacterium bovis (strain ATCC BAA-935 / AF2122/97).